Consider the following 443-residue polypeptide: Arginine biosynthesis bifunctional protein ArgJ, mitochondrial (443 aa).

Positions 179, 206, 217, 303, 438, and 443 each coordinate substrate. T217 (nucleophile) is an active-site residue.

Belongs to the ArgJ family. Heterodimer of an alpha and a beta chain. The alpha and beta chains are autoproteolytically processed from a single precursor protein within the mitochondrion.

It is found in the mitochondrion matrix. The enzyme catalyses N(2)-acetyl-L-ornithine + L-glutamate = N-acetyl-L-glutamate + L-ornithine. The catalysed reaction is L-glutamate + acetyl-CoA = N-acetyl-L-glutamate + CoA + H(+). It functions in the pathway amino-acid biosynthesis; L-arginine biosynthesis; L-ornithine and N-acetyl-L-glutamate from L-glutamate and N(2)-acetyl-L-ornithine (cyclic): step 1/1. The protein operates within amino-acid biosynthesis; L-arginine biosynthesis; N(2)-acetyl-L-ornithine from L-glutamate: step 1/4. Functionally, catalyzes two activities which are involved in the cyclic version of arginine biosynthesis: the synthesis of acetylglutamate from glutamate and acetyl-CoA, and of ornithine by transacetylation between acetylornithine and glutamate. The polypeptide is Arginine biosynthesis bifunctional protein ArgJ, mitochondrial (Eremothecium gossypii (strain ATCC 10895 / CBS 109.51 / FGSC 9923 / NRRL Y-1056) (Yeast)).